Reading from the N-terminus, the 1066-residue chain is Coiled-coil domain-containing protein 73 (1066 aa).

Coiled-coil stretches lie at residues 47–134 (KAET…QVSQ) and 178–391 (LVRE…KTEE). Disordered regions lie at residues 568-600 (LDTR…SNPF), 719-811 (SENS…PKSG), 854-883 (LSPA…PEKT), 944-978 (KNIE…EERN), and 1003-1027 (VQQS…PGNN). Polar residues-rich tracts occupy residues 591–600 (NTDGSESNPF), 742–781 (RTNT…TSQA), 789–811 (PLTT…PKSG), 857–869 (ATPS…TSAR), and 948–964 (SDPT…SNWS). The segment covering 967 to 978 (LDPKGQPREERN) has biased composition (basic and acidic residues). Over residues 1003-1013 (VQQSHSQTVKV) the composition is skewed to polar residues.

This is Coiled-coil domain-containing protein 73 (Ccdc73) from Mus musculus (Mouse).